The following is a 707-amino-acid chain: Choline transporter-like protein 4 (707 aa).

Over 1–32 the chain is Cytoplasmic; sequence MGEKQDPDKAYGKPAKYDPSFRGPIRNRSCTD. The chain crosses the membrane as a helical span at residues 33-53; that stretch reads IICCVLFFVFILGYIAVGLVA. Residues 54–226 lie on the Extracellular side of the membrane; sequence WVYGDPQQVL…KIFEDFAQSW (173 aa). N-linked (GlcNAc...) asparagine glycosylation is found at asparagine 67, asparagine 142, asparagine 184, and asparagine 195. Residues 227–247 form a helical membrane-spanning segment; sequence YWILAALGVALVLSLLFVLLL. The Cytoplasmic portion of the chain corresponds to 248 to 249; sequence RL. A helical membrane pass occupies residues 250-270; that stretch reads VAGPLVFVLIIGVLGVLAYGI. The Extracellular portion of the chain corresponds to 271–306; sequence YHCWNEYRLLRDKGASISQLGFTTNLSAYSSVQETW. Asparagine 295 carries N-linked (GlcNAc...) asparagine glycosylation. Residues 307-327 form a helical membrane-spanning segment; sequence LAALILLAVLEGILLLMLIFL. The Cytoplasmic segment spans residues 328–355; that stretch reads RQRIRIAIALLEEASRAVGQMMSTLFYP. A helical transmembrane segment spans residues 356 to 376; sequence LVTFVLLLVCIAYWAMTALYL. Residues 377–452 lie on the Extracellular side of the membrane; it reads ATSGQPQYVL…GVLGLFWTIN (76 aa). 3 N-linked (GlcNAc...) asparagine glycosylation sites follow: asparagine 390, asparagine 402, and asparagine 413. Residues 453-473 traverse the membrane as a helical segment; sequence WVLALGQCVLAGAFASFYWAF. Over 474–498 the chain is Cytoplasmic; that stretch reads HKPRDIPTFPLSSAFIRTLRYHTGS. A helical transmembrane segment spans residues 499–519; sequence LAFGALILTLVQIARAILEYI. The Extracellular segment spans residues 520–557; the sequence is DHKLRGAQNPVARCIMCCFKCCLWCLEKFIKFLNRNAY. Residues 558–578 form a helical membrane-spanning segment; sequence IMIAIYGKNFCVSAKNAFMLL. At 579-594 the chain is on the cytoplasmic side; it reads MRNIVRVVVLDKVTDL. A helical transmembrane segment spans residues 595–615; it reads LLFFGKLLVVGGVGVLSFFFF. The Extracellular portion of the chain corresponds to 616–635; that stretch reads TGRIQGLGKDFESPQLNYYW. Residues 636–656 form a helical membrane-spanning segment; that stretch reads LPIMTSIMGAYVIASGFFSVF. Topologically, residues 657-707 are cytoplasmic; that stretch reads GMCVDTLFLCFLEDLERNDGSLDRPYYMSKALLKILGKKNEVPSGDKKRKK.

It belongs to the CTL (choline transporter-like) family. Post-translationally, N-glycosylated; N-glycosylation of Asn-677 and Asn-390 is required for a proper thiamine pyrophosphate uptake.

The protein localises to the membrane. It localises to the apical cell membrane. It catalyses the reaction choline(out) + n H(+)(in) = choline(in) + n H(+)(out). The enzyme catalyses thiamine diphosphate(out) = thiamine diphosphate(in). In terms of biological role, choline transporter that plays a role in the choline-acetylcholine system and is required to the efferent innervation of hair cells in the olivocochlear bundle for the maintenance of physiological function of outer hair cells and the protection of hair cells from acoustic injury. Also described as a thiamine pyrophosphate transporter in colon, may mediate the absorption of microbiota-generated thiamine pyrophosphate and contribute to host thiamine (vitamin B1) homeostasis. This Sus scrofa (Pig) protein is Choline transporter-like protein 4.